Consider the following 470-residue polypeptide: Iron-sulfur cluster assembly protein SufB (470 aa).

Belongs to the iron-sulfur cluster assembly SufBD family. In terms of assembly, component of a complex composed of SufB, SufC and SufD in a stoichiometric ratio of 1:2:1. Interacts with SufC. Interacts with SufD.

The protein operates within cofactor biosynthesis; iron-sulfur cluster biosynthesis. In terms of biological role, participates in the sulfur mobilization (SUF) pathway for iron-sulfur (Fe-S) cluster biogenesis. As part of a complex consisting of SufB-SufC(2)-SufD, involved in assembly of [4Fe-4S] clusters. Exhibits ATPase activity. The protein is Iron-sulfur cluster assembly protein SufB of Plasmodium falciparum (isolate 3D7).